The following is a 101-amino-acid chain: Ubiquitin-related modifier 1 (101 aa).

1-thioglycine is present on Gly101. Gly101 is covalently cross-linked (Glycyl lysine isopeptide (Gly-Lys) (interchain with K-? in acceptor proteins)).

The protein belongs to the URM1 family. As to quaternary structure, component of a complex at least composed of URM1, CTU2/NCS2 and CTU1/ATPBD3. In terms of processing, C-terminal thiocarboxylation occurs in 2 steps, it is first acyl-adenylated (-COAMP) via the hesA/moeB/thiF part of MOCS3, then thiocarboxylated (-COSH) via the rhodanese domain of MOCS3.

The protein resides in the cytoplasm. It participates in tRNA modification; 5-methoxycarbonylmethyl-2-thiouridine-tRNA biosynthesis. Functionally, acts as a sulfur carrier required for 2-thiolation of mcm(5)S(2)U at tRNA wobble positions of cytosolic tRNA(Lys), tRNA(Glu) and tRNA(Gln). Serves as sulfur donor in tRNA 2-thiolation reaction by being thiocarboxylated (-COSH) at its C-terminus by MOCS3. The sulfur is then transferred to tRNA to form 2-thiolation of mcm(5)S(2)U. Also acts as a ubiquitin-like protein (UBL) that is covalently conjugated via an isopeptide bond to lysine residues of target proteins such as MOCS3, ATPBD3, CTU2, USP15 and CAS. The thiocarboxylated form serves as substrate for conjugation and oxidative stress specifically induces the formation of UBL-protein conjugates. This chain is Ubiquitin-related modifier 1, found in Bos taurus (Bovine).